A 118-amino-acid polypeptide reads, in one-letter code: Small ribosomal subunit protein uS13 (118 aa).

A disordered region spans residues 94-118; sequence SLPLRGQRTKTNARTRKGPRKPIKK.

Belongs to the universal ribosomal protein uS13 family. In terms of assembly, part of the 30S ribosomal subunit. Forms a loose heterodimer with protein S19. Forms two bridges to the 50S subunit in the 70S ribosome.

Its function is as follows. Located at the top of the head of the 30S subunit, it contacts several helices of the 16S rRNA. In the 70S ribosome it contacts the 23S rRNA (bridge B1a) and protein L5 of the 50S subunit (bridge B1b), connecting the 2 subunits; these bridges are implicated in subunit movement. Contacts the tRNAs in the A and P-sites. This chain is Small ribosomal subunit protein uS13, found in Vibrio cholerae serotype O1 (strain ATCC 39315 / El Tor Inaba N16961).